The primary structure comprises 386 residues: Circumsporozoite protein (386 aa).

An N-terminal signal peptide occupies residues 1-22 (MKNFILLAVSSILLVDLFPTHC). The interval 51–304 (HVGQSASRGR…NEGANAPNEK (254 aa)) is disordered. The span at 72-100 (DAKKKKDGKKAEPKNPRENKLKQPGDRAD) shows a compositional bias: basic and acidic residues. The tract at residues 80–88 (KKAEPKNPR) is required for the binding to heparan sulfate proteoglycans (HSPGs) on the surface of host hepatocytes. Positions 91 to 95 (KLKQP) are region I; contains the proteolytic cleavage site. 20 repeat units span residues 96–104 (GDRADGQPA), 105–113 (GDRADGQPA), 114–122 (GDRADGQPA), 123–131 (GDRADGQPA), 132–140 (GDRADGQPA), 141–149 (GDRAAGQPA), 150–158 (GDRADGQPA), 159–167 (GDRADGQPA), 168–176 (GDRAAGQPA), 177–185 (GDRAAGQPA), 186–194 (GDRADGQPA), 195–203 (GDRADGQPA), 204–212 (GDRADGQPA), 213–221 (GDRAAGQPA), 222–230 (GDRAAGQPA), 231–239 (GDRAAGQPA), 240–248 (GDRAAGQPA), 249–257 (GDRAAGQPA), 258–266 (GDRAAGQPA), and 267–275 (GDRAAGQPA). Residues 96-275 (GDRADGQPAG…AGDRAAGQPA (180 aa)) form a 20 X 9 AA tandem repeats of G-D-R-A-[AD]-G-Q-P-A region. Residues 275–292 (AGNGAGGQAAGGNAGGQG) show a composition bias toward gly residues. A compositionally biased stretch (low complexity) spans 293–303 (QNNEGANAPNE). The TSP type-1 domain occupies 312 to 364 (KVRATVGTEWTPCSVTCGVGVRVRRRVNAANKKPEDLTLNDLETDVCTMDKCA). Intrachain disulfides connect cysteine 324-cysteine 358 and cysteine 328-cysteine 363. Threonine 327 carries O-linked (Fuc) threonine glycosylation. Residue cysteine 363 is the site of GPI-anchor amidated cysteine attachment. The propeptide at 364 to 386 (AGIFNVVSNSLGLVILLVLALFN) is removed in mature form.

Belongs to the plasmodium circumsporozoite protein family. Post-translationally, during host cell invasion, proteolytically cleaved at the cell membrane in the region I by a papain-like cysteine protease of parasite origin. Cleavage is triggered by the sporozoite contact with highly sulfated heparan sulfate proteoglycans (HSPGs) present on the host hepatocyte cell surface. Cleavage exposes the TSP type-1 (TSR) domain and is required for productive invasion of host hepatocytes but not for adhesion to the host cell membrane. Cleavage is dispensable for sporozoite development in the oocyst, motility and for traversal of host and vector cells. O-glycosylated; maybe by POFUT2.

It is found in the cell membrane. It localises to the cytoplasm. In terms of biological role, essential sporozoite protein. In the mosquito vector, required for sporozoite development in the oocyst, migration through the vector hemolymph and entry into the vector salivary glands. In the vertebrate host, required for sporozoite migration through the host dermis and infection of host hepatocytes. Binds to highly sulfated heparan sulfate proteoglycans (HSPGs) on the surface of host hepatocytes. In the vertebrate host, binds to highly sulfated heparan sulfate proteoglycans (HSPGs) on the surface of host hepatocytes and is required for sporozoite invasion of the host hepatocytes. The protein is Circumsporozoite protein of Plasmodium simium.